The sequence spans 89 residues: MSQQKGNKSRINVEIYGQQYSVVGDESTSHIRMVAAIVDDKMRELNAKNPSLDTSRLAVLTAVNVIHDYIKLKEEHEKLKESMTQKGME.

It belongs to the ZapA family. Type 2 subfamily. In terms of assembly, homodimer. Interacts with FtsZ.

Its subcellular location is the cytoplasm. In terms of biological role, activator of cell division through the inhibition of FtsZ GTPase activity, therefore promoting FtsZ assembly into bundles of protofilaments necessary for the formation of the division Z ring. It is recruited early at mid-cell but it is not essential for cell division. This Bacillus mycoides (strain KBAB4) (Bacillus weihenstephanensis) protein is Cell division protein ZapA.